The chain runs to 308 residues: D-alanine--D-alanine ligase (308 aa).

The ATP-grasp domain occupies 103–302 (KTVMATAGVP…FDELVQWMVE (200 aa)). An ATP-binding site is contributed by 130–184 (MAPPYVIKPVADGSSVGVFMVTEAHEHPPQELFRDDWPHGEQLLVEKYVAGKELT). Mg(2+) is bound by residues Asp252, Glu269, and Asn271.

This sequence belongs to the D-alanine--D-alanine ligase family. The cofactor is Mg(2+). Requires Mn(2+) as cofactor.

The protein resides in the cytoplasm. The catalysed reaction is 2 D-alanine + ATP = D-alanyl-D-alanine + ADP + phosphate + H(+). The protein operates within cell wall biogenesis; peptidoglycan biosynthesis. Cell wall formation. In Rhodopseudomonas palustris (strain BisB18), this protein is D-alanine--D-alanine ligase.